The chain runs to 355 residues: MSGKTRRLMVMAGGTGGHVFPGLAVAHHLKDQGWDVLWLGTADRMEADLVPKHGIDIEFIQISGLRGKGIKALLAAPVRIFKAIRQAKAIMRRYQPDVVLGMGGYVSGPGGIAAWMCGVPVVLHEQNGIAGLTNRWLAKIATTVLQAFPGAFPKAPVVGNPVREDVLALPIPEQRLTGREGPIRVLVVGGSQGARILNQAMPEIAARMGDKITLWHQTGKGAKESVQNAYDNSVKCEHKITEFIDDMAQAYAWADVVICRSGALTVSEVSAAGLPGIFVPFQHKDRQQYWNALPLEKVGAAKILEQPQFTVDAVIELLTQWQRPQLLEMAEKARSAAIVDATEQVSAALIDAAKK.

Residues 15-17 (TGG), Asn-127, Arg-163, Ser-191, Ile-244, 263-268 (ALTVSE), and Gln-288 contribute to the UDP-N-acetyl-alpha-D-glucosamine site.

Belongs to the glycosyltransferase 28 family. MurG subfamily.

Its subcellular location is the cell inner membrane. It catalyses the reaction di-trans,octa-cis-undecaprenyl diphospho-N-acetyl-alpha-D-muramoyl-L-alanyl-D-glutamyl-meso-2,6-diaminopimeloyl-D-alanyl-D-alanine + UDP-N-acetyl-alpha-D-glucosamine = di-trans,octa-cis-undecaprenyl diphospho-[N-acetyl-alpha-D-glucosaminyl-(1-&gt;4)]-N-acetyl-alpha-D-muramoyl-L-alanyl-D-glutamyl-meso-2,6-diaminopimeloyl-D-alanyl-D-alanine + UDP + H(+). It functions in the pathway cell wall biogenesis; peptidoglycan biosynthesis. Functionally, cell wall formation. Catalyzes the transfer of a GlcNAc subunit on undecaprenyl-pyrophosphoryl-MurNAc-pentapeptide (lipid intermediate I) to form undecaprenyl-pyrophosphoryl-MurNAc-(pentapeptide)GlcNAc (lipid intermediate II). In Photorhabdus laumondii subsp. laumondii (strain DSM 15139 / CIP 105565 / TT01) (Photorhabdus luminescens subsp. laumondii), this protein is UDP-N-acetylglucosamine--N-acetylmuramyl-(pentapeptide) pyrophosphoryl-undecaprenol N-acetylglucosamine transferase.